We begin with the raw amino-acid sequence, 577 residues long: Arginine--tRNA ligase (577 aa).

The short motif at 122 to 132 (PNVAKEMHVGH) is the 'HIGH' region element.

This sequence belongs to the class-I aminoacyl-tRNA synthetase family. As to quaternary structure, monomer.

It localises to the cytoplasm. It catalyses the reaction tRNA(Arg) + L-arginine + ATP = L-arginyl-tRNA(Arg) + AMP + diphosphate. The protein is Arginine--tRNA ligase of Shigella flexneri.